We begin with the raw amino-acid sequence, 409 residues long: MKTFRDFKKKIKNNNNNKNNKNNNINNNNSNNNKNNKNNNNNNSNNIYTPSISIIDNYDTLCSTPQNLKSNLKKNLNINNQEFITSNILEIDWNTIIDIEIIDFGNSIVCLLVTLSSDNLHFNQILIKSTPTIAQECYASVLQNILKLPILDLRLLEKNNEFLEMSSNLLDFSKDDQFLNDFIKSEFEKTFFLIMEFRQNGKKFNELNHKEYFSGYKGQEKFKQLGKIIAFDIFCNNFCKTNIAGDDSSIYFSNIICYETPNKNGWYFSLINSNISCLNNSLFTIGYRYHMNSLKLLLFSIFQNPSTESFQIRMMREHLLKKLNIKLPKSSAVYIQKGIAKGIKSIVNYINYPLLENTKDKVKNIVSCDNYNIWKKGIDSIHCPFLLDVLNEIEIEISNRREKVYFVKI.

The interval 1-45 (MKTFRDFKKKIKNNNNNKNNKNNNINNNNSNNNKNNKNNNNNNSN) is disordered. Positions 5–46 (RDFKKKIKNNNNNKNNKNNNINNNNSNNNKNNKNNNNNNSNN) form a coiled coil. Residues 13–45 (NNNNNKNNKNNNINNNNSNNNKNNKNNNNNNSN) are compositionally biased toward low complexity.

It belongs to the protein kinase superfamily. AFK Ser/Thr protein kinase family.

The chain is Putative actin-fragmin kinase DDB_G0268812 from Dictyostelium discoideum (Social amoeba).